A 231-amino-acid polypeptide reads, in one-letter code: Albumin-2 (231 aa).

4 Hemopexin repeats span residues 4–55 (TGYI…FKSL), 62–112 (SYGV…FPFF), 118–166 (ENGI…FPCF), and 172–223 (ESGT…WPSL). Ca(2+)-binding residues include N8, D66, D122, and D176.

In terms of assembly, monomer and homodimer.

The protein localises to the cytoplasm. The protein resides in the cytosol. May play a role in response to oxidative stress and polyamine biosynthesis. The chain is Albumin-2 from Pisum sativum (Garden pea).